The following is a 458-amino-acid chain: tRNA modification GTPase MnmE (458 aa).

Residues arginine 30, glutamate 90, and lysine 129 each contribute to the (6S)-5-formyl-5,6,7,8-tetrahydrofolate site. A TrmE-type G domain is found at 225–379; sequence GLSICLIGCP…LHQTIDTIIW (155 aa). Residue asparagine 235 participates in K(+) binding. GTP is bound by residues 235–240, 254–260, and 279–282; these read NVGKSS, SPIPGTT, and DTAG. Serine 239 serves as a coordination point for Mg(2+). K(+)-binding residues include serine 254, isoleucine 256, and threonine 259. A Mg(2+)-binding site is contributed by threonine 260. (6S)-5-formyl-5,6,7,8-tetrahydrofolate is bound at residue lysine 458.

The protein belongs to the TRAFAC class TrmE-Era-EngA-EngB-Septin-like GTPase superfamily. TrmE GTPase family. Homodimer. Heterotetramer of two MnmE and two MnmG subunits. Requires K(+) as cofactor.

It is found in the cytoplasm. Functionally, exhibits a very high intrinsic GTPase hydrolysis rate. Involved in the addition of a carboxymethylaminomethyl (cmnm) group at the wobble position (U34) of certain tRNAs, forming tRNA-cmnm(5)s(2)U34. This chain is tRNA modification GTPase MnmE, found in Protochlamydia amoebophila (strain UWE25).